We begin with the raw amino-acid sequence, 1465 residues long: Ankyrin and armadillo repeat-containing protein (1465 aa).

The helical transmembrane segment at 313 to 329 threads the bilayer; that stretch reads MGYLKLICFLIPFLLSL. ANK repeat units lie at residues 532–561, 582–611, 615–644, 651–680, and 684–714; these read AGYA…NVNQ, NGPT…DYTL, RGWM…SLLE, NQCT…NWRK, and KGNN…ELPV. ARM repeat units follow at residues 745-784, 786-825, 827-865, 868-907, 910-949, and 1085-1125; these read DRYW…NIST, VSIV…DVAK, ENKD…VLCM, ESNQ…EVAR, KEVQ…SLAN, and PMSQ…CIVL. The tract at residues 1431 to 1465 is disordered; sequence KLGKDEQKANPDPPAFLNKLGKDEQNANPDPAESQ.

It is found in the membrane. This Mus musculus (Mouse) protein is Ankyrin and armadillo repeat-containing protein (Ankar).